Reading from the N-terminus, the 279-residue chain is Large ribosomal subunit protein uL5c (279 aa).

Disordered regions lie at residues methionine 1–serine 23 and leucine 40–glycine 63. The N-terminal 43 residues, methionine 1–alanine 43, are a transit peptide targeting the chloroplast. Positions arginine 41–alanine 50 are enriched in low complexity. Positions proline 51–serine 60 are enriched in pro residues.

The protein belongs to the universal ribosomal protein uL5 family. In terms of assembly, part of the 50S ribosomal subunit; contacts the 5S rRNA.

It is found in the plastid. The protein resides in the chloroplast. Binds 5S rRNA, forms part of the central protuberance of the 50S subunit. The polypeptide is Large ribosomal subunit protein uL5c (RPL5) (Oryza sativa subsp. japonica (Rice)).